Reading from the N-terminus, the 447-residue chain is Adenylosuccinate synthetase (447 aa).

GTP contacts are provided by residues 12-18 (GDEGKGK) and 40-42 (GHT). The active-site Proton acceptor is the aspartate 13. The Mg(2+) site is built by aspartate 13 and glycine 40. IMP is bound by residues 13–16 (DEGK), 38–41 (NAGH), threonine 128, arginine 142, glutamine 223, threonine 238, and arginine 302. Histidine 41 (proton donor) is an active-site residue. 298–304 (TTTGRRR) is a binding site for substrate. GTP contacts are provided by residues arginine 304, 330 to 332 (KLD), and 412 to 414 (SLG).

This sequence belongs to the adenylosuccinate synthetase family. Homodimer. Mg(2+) serves as cofactor.

It localises to the cytoplasm. It carries out the reaction IMP + L-aspartate + GTP = N(6)-(1,2-dicarboxyethyl)-AMP + GDP + phosphate + 2 H(+). It functions in the pathway purine metabolism; AMP biosynthesis via de novo pathway; AMP from IMP: step 1/2. In terms of biological role, plays an important role in the de novo pathway of purine nucleotide biosynthesis. Catalyzes the first committed step in the biosynthesis of AMP from IMP. In Microcystis aeruginosa (strain NIES-843 / IAM M-2473), this protein is Adenylosuccinate synthetase.